A 462-amino-acid chain; its full sequence is GTPase Der (462 aa).

EngA-type G domains follow at residues 2 to 164 and 195 to 366; these read KKIA…PKKE and INVA…KNYS. GTP contacts are provided by residues 8 to 15, 55 to 59, 116 to 119, 201 to 208, 248 to 252, and 312 to 315; these read GKPNVGKS, DTGGI, NKID, GRVNVGKS, DTAGI, and NKWD. Positions 367-451 constitute a KH-like domain; that stretch reads TWLPTGQLNR…PIILRPRKRG (85 aa).

The protein belongs to the TRAFAC class TrmE-Era-EngA-EngB-Septin-like GTPase superfamily. EngA (Der) GTPase family. As to quaternary structure, associates with the 50S ribosomal subunit.

GTPase that plays an essential role in the late steps of ribosome biogenesis. This Nitratiruptor sp. (strain SB155-2) protein is GTPase Der.